A 563-amino-acid chain; its full sequence is Putative cytochrome c oxidase subunit 1-beta (563 aa).

The next 7 membrane-spanning stretches (helical) occupy residues 34–54 (IGHL…VMAL), 76–96 (LFTL…FAGF), 117–137 (MLSY…LAVP), 164–184 (MWIM…VNFL), 208–228 (LFTS…LLVL), 252–272 (LFWF…FGII), and 284–304 (IFGY…SVVV). Position 80 (His80) interacts with Fe(II)-heme a. His258 and Tyr262 together coordinate Cu cation. Positions 258 to 262 (HPEVY) form a cross-link, 1'-histidyl-3'-tyrosine (His-Tyr). Cu cation is bound by residues His307 and His308. Transmembrane regions (helical) follow at residues 309 to 329 (MFAT…LIAV) and 353 to 373 (MLWA…GVIL). His391 serves as a coordination point for heme a3. Transmembrane regions (helical) follow at residues 392-412 (FHYV…YFWW), 427-447 (IHFW…HWLG), and 470-490 (LSTI…YNVW). His393 serves as a coordination point for Fe(II)-heme a. Residues 536-563 (AFDLHHPAHAGEAPQPEPKHEQADREPS) are disordered. Basic and acidic residues predominate over residues 552-563 (EPKHEQADREPS).

It belongs to the heme-copper respiratory oxidase family. As to quaternary structure, associates with subunits II, III and IV to form cytochrome c oxidase. It depends on Cu(2+) as a cofactor. Requires heme as cofactor.

It is found in the cell membrane. The catalysed reaction is 4 Fe(II)-[cytochrome c] + O2 + 8 H(+)(in) = 4 Fe(III)-[cytochrome c] + 2 H2O + 4 H(+)(out). Its pathway is energy metabolism; oxidative phosphorylation. In terms of biological role, cytochrome c oxidase is the component of the respiratory chain that catalyzes the reduction of oxygen to water. Subunits 1-3 form the functional core of the enzyme complex. CO I is the catalytic subunit of the enzyme. Electrons originating in cytochrome c are transferred via the copper A center of subunit 2 and heme A of subunit 1 to the bimetallic center formed by heme A3 and copper B. This is Putative cytochrome c oxidase subunit 1-beta (ctaD2) from Streptomyces avermitilis (strain ATCC 31267 / DSM 46492 / JCM 5070 / NBRC 14893 / NCIMB 12804 / NRRL 8165 / MA-4680).